Here is a 426-residue protein sequence, read N- to C-terminus: uncharacterized protein (426 aa).

This sequence to M.leprae L518_C2_147 and M.tuberculosis Rv1524.

This is an uncharacterized protein from Mycobacterium tuberculosis (strain CDC 1551 / Oshkosh).